The primary structure comprises 215 residues: Oligoribonuclease (215 aa).

Positions 5 to 170 (LVWIDCEMTG…ADIHESIREL (166 aa)) constitute an Exonuclease domain. The active site involves tyrosine 127. The tract at residues 196–215 (LGPPGKDAADTDSAAGHTTG) is disordered.

This sequence belongs to the oligoribonuclease family.

Its subcellular location is the cytoplasm. Functionally, 3'-to-5' exoribonuclease specific for small oligoribonucleotides. The sequence is that of Oligoribonuclease from Mycobacterium sp. (strain JLS).